Here is a 502-residue protein sequence, read N- to C-terminus: Glycerol kinase (502 aa).

ADP is bound at residue Thr-13. ATP is bound by residues Thr-13, Thr-14, and Ser-15. Thr-13 is a sn-glycerol 3-phosphate binding site. Arg-17 contacts ADP. Residues Arg-83, Glu-84, Tyr-136, and Asp-246 each coordinate sn-glycerol 3-phosphate. Residues Arg-83, Glu-84, Tyr-136, Asp-246, and Gln-247 each contribute to the glycerol site. ADP is bound by residues Thr-268 and Gly-311. Thr-268, Gly-311, Gln-315, and Gly-412 together coordinate ATP. Residues Gly-412 and Asn-416 each contribute to the ADP site.

It belongs to the FGGY kinase family.

The enzyme catalyses glycerol + ATP = sn-glycerol 3-phosphate + ADP + H(+). It functions in the pathway polyol metabolism; glycerol degradation via glycerol kinase pathway; sn-glycerol 3-phosphate from glycerol: step 1/1. With respect to regulation, inhibited by fructose 1,6-bisphosphate (FBP). Its function is as follows. Key enzyme in the regulation of glycerol uptake and metabolism. Catalyzes the phosphorylation of glycerol to yield sn-glycerol 3-phosphate. The chain is Glycerol kinase from Francisella tularensis subsp. mediasiatica (strain FSC147).